The sequence spans 187 residues: Peptide deformylase (187 aa).

Fe cation contacts are provided by Cys-94 and His-136. Residue Glu-137 is part of the active site. His-140 serves as a coordination point for Fe cation.

It belongs to the polypeptide deformylase family. Fe(2+) is required as a cofactor.

It carries out the reaction N-terminal N-formyl-L-methionyl-[peptide] + H2O = N-terminal L-methionyl-[peptide] + formate. Its function is as follows. Removes the formyl group from the N-terminal Met of newly synthesized proteins. Requires at least a dipeptide for an efficient rate of reaction. N-terminal L-methionine is a prerequisite for activity but the enzyme has broad specificity at other positions. This chain is Peptide deformylase, found in Chlorobaculum tepidum (strain ATCC 49652 / DSM 12025 / NBRC 103806 / TLS) (Chlorobium tepidum).